The following is a 514-amino-acid chain: Proline--tRNA ligase (514 aa).

It belongs to the class-II aminoacyl-tRNA synthetase family. ProS type 3 subfamily. In terms of assembly, homodimer.

The protein resides in the cytoplasm. The catalysed reaction is tRNA(Pro) + L-proline + ATP = L-prolyl-tRNA(Pro) + AMP + diphosphate. Its function is as follows. Catalyzes the attachment of proline to tRNA(Pro) in a two-step reaction: proline is first activated by ATP to form Pro-AMP and then transferred to the acceptor end of tRNA(Pro). This chain is Proline--tRNA ligase, found in Erythrobacter litoralis (strain HTCC2594).